The chain runs to 450 residues: Methionine aminopeptidase 2 (450 aa).

A disordered region spans residues 1–99 (MAVQAPEVDK…LFPNSQYPEG (99 aa)). Over residues 33 to 49 (GDEDAENEESDEDDDQG) the composition is skewed to acidic residues. Basic residues predominate over residues 60 to 75 (KKKRKRKPKKKKKKGV). Residue His-200 participates in substrate binding. Positions 220, 231, and 300 each coordinate a divalent metal cation. His-308 contributes to the substrate binding site. The a divalent metal cation site is built by Glu-336 and Glu-431.

This sequence belongs to the peptidase M24A family. Methionine aminopeptidase eukaryotic type 2 subfamily. Requires Co(2+) as cofactor. The cofactor is Zn(2+). Mn(2+) serves as cofactor. Fe(2+) is required as a cofactor.

It is found in the cytoplasm. The catalysed reaction is Release of N-terminal amino acids, preferentially methionine, from peptides and arylamides.. Functionally, cotranslationally removes the N-terminal methionine from nascent proteins. The N-terminal methionine is often cleaved when the second residue in the primary sequence is small and uncharged (Met-Ala-, Cys, Gly, Pro, Ser, Thr, or Val). The protein is Methionine aminopeptidase 2 of Uncinocarpus reesii (strain UAMH 1704).